A 696-amino-acid polypeptide reads, in one-letter code: Glycine--tRNA ligase beta subunit (696 aa).

The protein belongs to the class-II aminoacyl-tRNA synthetase family. Tetramer of two alpha and two beta subunits.

Its subcellular location is the cytoplasm. The enzyme catalyses tRNA(Gly) + glycine + ATP = glycyl-tRNA(Gly) + AMP + diphosphate. This is Glycine--tRNA ligase beta subunit from Methylorubrum extorquens (strain CM4 / NCIMB 13688) (Methylobacterium extorquens).